The sequence spans 229 residues: 2,3-bisphosphoglycerate-dependent phosphoglycerate mutase (229 aa).

Residues 7 to 14 (RHGQSEWN), 20 to 21 (TG), Arg59, 86 to 89 (ERHY), Lys97, 113 to 114 (RR), and 182 to 183 (GN) contribute to the substrate site. Residue His8 is the Tele-phosphohistidine intermediate of the active site. The Proton donor/acceptor role is filled by Glu86.

It belongs to the phosphoglycerate mutase family. BPG-dependent PGAM subfamily.

The catalysed reaction is (2R)-2-phosphoglycerate = (2R)-3-phosphoglycerate. The protein operates within carbohydrate degradation; glycolysis; pyruvate from D-glyceraldehyde 3-phosphate: step 3/5. Catalyzes the interconversion of 2-phosphoglycerate and 3-phosphoglycerate. This chain is 2,3-bisphosphoglycerate-dependent phosphoglycerate mutase, found in Listeria innocua serovar 6a (strain ATCC BAA-680 / CLIP 11262).